The sequence spans 404 residues: CCA-adding enzyme (404 aa).

2 residues coordinate ATP: G27 and R30. Positions 27 and 30 each coordinate CTP. Positions 40 and 42 each coordinate Mg(2+). 5 residues coordinate ATP: R111, D154, R157, R160, and R163. Positions 111, 154, 157, 160, and 163 each coordinate CTP.

It belongs to the tRNA nucleotidyltransferase/poly(A) polymerase family. Bacterial CCA-adding enzyme type 3 subfamily. As to quaternary structure, homodimer. The cofactor is Mg(2+).

It carries out the reaction a tRNA precursor + 2 CTP + ATP = a tRNA with a 3' CCA end + 3 diphosphate. The enzyme catalyses a tRNA with a 3' CCA end + 2 CTP + ATP = a tRNA with a 3' CCACCA end + 3 diphosphate. Its function is as follows. Catalyzes the addition and repair of the essential 3'-terminal CCA sequence in tRNAs without using a nucleic acid template. Adds these three nucleotides in the order of C, C, and A to the tRNA nucleotide-73, using CTP and ATP as substrates and producing inorganic pyrophosphate. tRNA 3'-terminal CCA addition is required both for tRNA processing and repair. Also involved in tRNA surveillance by mediating tandem CCA addition to generate a CCACCA at the 3' terminus of unstable tRNAs. While stable tRNAs receive only 3'-terminal CCA, unstable tRNAs are marked with CCACCA and rapidly degraded. This is CCA-adding enzyme from Geobacillus sp. (strain WCH70).